Reading from the N-terminus, the 290-residue chain is Programmed cell death 1 ligand 1 (290 aa).

The first 18 residues, 1 to 18, serve as a signal peptide directing secretion; it reads MRIFAVFIFMTYWHLLNA. The Ig-like V-type domain occupies 19–127; the sequence is FTVTVPKDLY…YGGADYKRIT (109 aa). Residues 19–238 are Extracellular-facing; sequence FTVTVPKDLY…LPLAHPPNER (220 aa). Asparagine 35 carries N-linked (GlcNAc...) asparagine glycosylation. 2 cysteine pairs are disulfide-bonded: cysteine 40-cysteine 114 and cysteine 155-cysteine 209. The Ig-like C2-type domain maps to 133–225; that stretch reads PYNKINQRIL…PEENHTAELV (93 aa). 3 N-linked (GlcNAc...) asparagine glycosylation sites follow: asparagine 192, asparagine 200, and asparagine 219. A helical membrane pass occupies residues 239-259; it reads THLVILGAILLCLGVALTFIF. The Cytoplasmic segment spans residues 260-290; that stretch reads RLRKGRMMDVKKCGIQDTNSKKQSDTHLEET.

Belongs to the immunoglobulin superfamily. BTN/MOG family. In terms of assembly, interacts with PDCD1. Interacts (via transmembrane domain) with CMTM4 and CMTM6. Interacts with (phosphorylated) STAT3; promoting nuclear translocation. Interacts with CD80. May form homomultimers. Post-translationally, ubiquitinated; STUB1 likely mediates polyubiquitination of PD-L1/CD274 triggering its degradation. Ubiquitinated by MARCHF8; leading to degradation. Deubiquitinated by USP22; leading to stabilization. Highly expressed in the heart, skeletal muscle, placenta and lung. Weakly expressed in the thymus, spleen, kidney and liver. Expressed on activated T- and B-cells, dendritic cells, keratinocytes and monocytes. In terms of tissue distribution, widely expressed, highest in lung, liver and pituitary and in various peripheral blood cells, including neutrophils and some subtypes of lymphoid and myeloid cells.

The protein localises to the cell membrane. It is found in the early endosome membrane. It localises to the recycling endosome membrane. Its subcellular location is the nucleus. The protein resides in the endomembrane system. The protein localises to the secreted. In terms of biological role, plays a critical role in induction and maintenance of immune tolerance to self. As a ligand for the inhibitory receptor PDCD1/PD-1, modulates the activation threshold of T-cells and limits T-cell effector response. Through a yet unknown activating receptor, may costimulate T-cell subsets that predominantly produce interleukin-10 (IL10). Can also act as a transcription coactivator: in response to hypoxia, translocates into the nucleus via its interaction with phosphorylated STAT3 and promotes transcription of GSDMC, leading to pyroptosis. Functionally, the PDCD1-mediated inhibitory pathway is exploited by tumors to attenuate anti-tumor immunity and escape destruction by the immune system, thereby facilitating tumor survival. The interaction with PDCD1/PD-1 inhibits cytotoxic T lymphocytes (CTLs) effector function. The blockage of the PDCD1-mediated pathway results in the reversal of the exhausted T-cell phenotype and the normalization of the anti-tumor response, providing a rationale for cancer immunotherapy. The sequence is that of Programmed cell death 1 ligand 1 from Homo sapiens (Human).